Consider the following 400-residue polypeptide: MIIKPRIRGFICTTTHPVGCEHNVKEQIALTKAQGPIANAPKRVLVVGSSSGYGLSSRITAAFGGGASTIGVFFEKAATEKKTGTAGWYNSAAFDKFAKEEGLYSKSLNGDAFSDEAKQKTIDLIKEDLGQIDMVVYSLASPVRKMPETGEVIRSSLKPIGNTYTATAVDTNKDAIIEASVEPATEQEIQDTITVMGGEDWELWMSALSDAGVLADGCKTVAYSYIGTELTWPIYWDGALGKAKMDLDRAATTLNEKLSATGGTANVAVLKSVVTQASSAIPVMPLYIAMVFKKMREEGVHEGCQEQILRMFSQRLYREDGSAPEVDDQNRLRLDDWELREDIQKHCRELWPQVTTENLKDLTDYVEYKEEFLKLFGFGVDGVDYDVDVNPLVEFDVADI.

NAD(+)-binding positions include 48-53, 74-75, 111-112, and 139-140; these read GSSSGY, FE, DA, and LA. Tyr-225 contacts substrate. Tyr-235 acts as the Proton donor in catalysis. Residues Lys-244 and 273–275 each bind NAD(+); that span reads VVT.

It belongs to the TER reductase family. Monomer.

It carries out the reaction a 2,3-saturated acyl-[ACP] + NAD(+) = a (2E)-enoyl-[ACP] + NADH + H(+). The protein operates within lipid metabolism; fatty acid biosynthesis. Functionally, involved in the final reduction of the elongation cycle of fatty acid synthesis (FAS II). Catalyzes the reduction of a carbon-carbon double bond in an enoyl moiety that is covalently linked to an acyl carrier protein (ACP). The sequence is that of Enoyl-[acyl-carrier-protein] reductase [NADH] from Aliivibrio salmonicida (strain LFI1238) (Vibrio salmonicida (strain LFI1238)).